A 429-amino-acid polypeptide reads, in one-letter code: ATP-dependent RNA helicase RhlB (429 aa).

The Q motif motif lies at 9–37 (EKFAQMGLEPEVLAGLESKGFHYCTPIQA). The Helicase ATP-binding domain occupies 40 to 219 (LPLLVEGHDL…YEHMNHPEHV (180 aa)). 53–60 (AQTGTGKT) contacts ATP. Positions 165–168 (DEAD) match the DEAD box motif. In terms of domain architecture, Helicase C-terminal spans 243-390 (KMLLLLSLME…VSKYDREALL (148 aa)). The tract at residues 395 to 429 (APKRVVRNRQPVNRNMRDRQGGGNSNNRRRPPRKS) is disordered.

The protein belongs to the DEAD box helicase family. RhlB subfamily. In terms of assembly, component of the RNA degradosome, which is a multiprotein complex involved in RNA processing and mRNA degradation.

The protein localises to the cytoplasm. The catalysed reaction is ATP + H2O = ADP + phosphate + H(+). Its function is as follows. DEAD-box RNA helicase involved in RNA degradation. Has RNA-dependent ATPase activity and unwinds double-stranded RNA. This chain is ATP-dependent RNA helicase RhlB, found in Aeromonas salmonicida (strain A449).